A 216-amino-acid polypeptide reads, in one-letter code: Probable GTP-binding protein EngB (216 aa).

The EngB-type G domain maps to E26 to P200. GTP contacts are provided by residues G34–S41, G61–L65, D79–G82, T146–D149, and Y179–S181. 2 residues coordinate Mg(2+): S41 and T63.

The protein belongs to the TRAFAC class TrmE-Era-EngA-EngB-Septin-like GTPase superfamily. EngB GTPase family. The cofactor is Mg(2+).

Necessary for normal cell division and for the maintenance of normal septation. The protein is Probable GTP-binding protein EngB of Vibrio vulnificus (strain CMCP6).